A 534-amino-acid chain; its full sequence is Cytochrome P450 78A9 (534 aa).

Residues 26–46 traverse the membrane as a helical segment; sequence LALSLLVASLASLALSLFFWS. Position 474 (Cys474) interacts with heme.

The protein belongs to the cytochrome P450 family. The cofactor is heme. In terms of tissue distribution, expressed in the funiculus of developing ovules.

It is found in the membrane. Its function is as follows. Plays a role in seed and fruit development. Functions probably in association with CYP78A6 in the regulation of seed growth. The protein is Cytochrome P450 78A9 (CYP78A9) of Arabidopsis thaliana (Mouse-ear cress).